The following is a 227-amino-acid chain: MICOS complex subunit MIC19 (227 aa).

The N-myristoyl glycine moiety is linked to residue Gly2. At Ser29 the chain carries Phosphoserine. 2 disordered regions span residues 34–61 (DRMK…SDEE) and 73–92 (EQAK…KELD). Residues 39-49 (SSPSGSKSQRY) are compositionally biased toward polar residues. Tyr49 is subject to Phosphotyrosine. Phosphoserine is present on residues Ser50, Ser56, and Ser58. An N6-acetyllysine modification is found at Lys142. The CHCH domain occupies 180–222 (HPVCADLQAKILQCYRENTHQTLKCSALATQYMHCVNHAKQSM). 2 short sequence motifs (cx9C motif) span residues 183-193 (CADLQAKILQC) and 204-214 (CSALATQYMHC). Cystine bridges form between Cys183–Cys214 and Cys193–Cys204.

Belongs to the MICOS complex subunit Mic19 family. Metazoan Mic19 subfamily. Component of the mitochondrial contact site and cristae organizing system (MICOS) complex, composed of at least MICOS10/MIC10, CHCHD3/MIC19, CHCHD6/MIC25, APOOL/MIC27, IMMT/MIC60, APOO/MIC23/MIC26 and MICOS13/MIC13. This complex was also known under the names MINOS or MitOS complex. The MICOS complex associates with mitochondrial outer membrane proteins SAMM50, MTX1 and MTX2 (together described as components of the mitochondrial outer membrane sorting assembly machinery (SAM) complex) and DNAJC11, mitochondrial inner membrane protein TMEM11 and with HSPA9. The MICOS and SAM complexes together with DNAJC11 are part of a large protein complex spanning both membranes termed the mitochondrial intermembrane space bridging (MIB) complex. Interacts with HSPA1A/HSPA1B and OPA1, preferentially with the soluble OPA1 form. Interacts with IMMT/MIC60. As to quaternary structure, (Microbial infection) Interacts with human cytomegalovirus protein UL13; this interaction alters cristae architecture. As to expression, detected at low levels in brain, placenta, lung, liver, kidney and pancreas with increased levels in heart and skeletal muscle. Higher expression in primary lung cancers than in normal lung tissue.

It localises to the mitochondrion inner membrane. Its subcellular location is the cytoplasm. The protein localises to the nucleus. It is found in the mitochondrion. Component of the MICOS complex, a large protein complex of the mitochondrial inner membrane that plays crucial roles in the maintenance of crista junctions, inner membrane architecture, and formation of contact sites to the outer membrane. Plays an important role in the maintenance of the MICOS complex stability and the mitochondrial cristae morphology. Has also been shown to function as a transcription factor which binds to the BAG1 promoter and represses BAG1 transcription. This Homo sapiens (Human) protein is MICOS complex subunit MIC19 (CHCHD3).